The following is a 226-amino-acid chain: METPSIDIQNIRAKYLNSHDPYLLESKLPTTSPFELFDIWFRNVASQSDLTFEEINAVSLSTVGKDLRPSSRMVLLKAYTPTGFSFYTNYTSRKGNQLEENPNAAMLFYWPKVNRQIRVEGVVEKLPDEMAVAYWNSRPVASRIGSKSSDQSKVVPDREFLESKKVALTELSVREGAQAITKPESWGGYHLIPRYFEFWQGQSDRLHDRIVFERDVDVWLLKRLSP.

Position 16 to 19 (16 to 19 (LNSH)) interacts with pyridoxal 5'-phosphate. An FMN-binding site is contributed by 72–75 (RMVL). K77 provides a ligand contact to pyridoxal 5'-phosphate. FMN-binding positions include 87–88 (YT), 93–94 (RK), and Q116. The pyridoxal 5'-phosphate site is built by Y134, R138, and S142. Residues 151–152 (QS) and W199 contribute to the FMN site. 205-207 (RLH) lines the pyridoxal 5'-phosphate pocket. R209 contacts FMN.

Belongs to the pyridoxamine 5'-phosphate oxidase family. Homodimer. The cofactor is FMN.

The catalysed reaction is pyridoxamine 5'-phosphate + O2 + H2O = pyridoxal 5'-phosphate + H2O2 + NH4(+). It catalyses the reaction pyridoxine 5'-phosphate + O2 = pyridoxal 5'-phosphate + H2O2. It functions in the pathway cofactor metabolism; pyridoxal 5'-phosphate salvage; pyridoxal 5'-phosphate from pyridoxamine 5'-phosphate: step 1/1. It participates in cofactor metabolism; pyridoxal 5'-phosphate salvage; pyridoxal 5'-phosphate from pyridoxine 5'-phosphate: step 1/1. Functionally, catalyzes the oxidation of either pyridoxine 5'-phosphate (PNP) or pyridoxamine 5'-phosphate (PMP) into pyridoxal 5'-phosphate (PLP). This is Putative pyridoxamine 5'-phosphate oxidase from Caenorhabditis elegans.